Consider the following 301-residue polypeptide: Sulfate adenylyltransferase subunit 2 (301 aa).

It belongs to the PAPS reductase family. CysD subfamily. Heterodimer composed of CysD, the smaller subunit, and CysN.

It carries out the reaction sulfate + ATP + H(+) = adenosine 5'-phosphosulfate + diphosphate. It participates in sulfur metabolism; hydrogen sulfide biosynthesis; sulfite from sulfate: step 1/3. Its function is as follows. With CysN forms the ATP sulfurylase (ATPS) that catalyzes the adenylation of sulfate producing adenosine 5'-phosphosulfate (APS) and diphosphate, the first enzymatic step in sulfur assimilation pathway. APS synthesis involves the formation of a high-energy phosphoric-sulfuric acid anhydride bond driven by GTP hydrolysis by CysN coupled to ATP hydrolysis by CysD. In Geotalea daltonii (strain DSM 22248 / JCM 15807 / FRC-32) (Geobacter daltonii), this protein is Sulfate adenylyltransferase subunit 2.